Here is a 704-residue protein sequence, read N- to C-terminus: Probable ferric reduction oxidase 1 (704 aa).

Topologically, residues 1 to 16 (MGVGEMNKEVIDKVIK) are cytoplasmic. Residues 17-36 (FLMMVILMGTIVIWIMMPTS) form a helical membrane-spanning segment. Residues 37-62 (TYKEIWLTSMRAKLGKSIYYGRPGVN) are Lumenal-facing. The chain crosses the membrane as a helical span at residues 63 to 81 (LLVYMFPMILLAFLGCIYL). At 82–115 (HLKKSTTVNQFNSGVEKKRAKFGALRRPMLVNGP) the chain is on the cytoplasmic side. A helical membrane pass occupies residues 116–139 (LGIVTVTEVMFLTMFMALLLWSLA). Residues 140–207 (NYMYRTFVNV…VGLTSESSIK (68 aa)) lie on the Lumenal side of the membrane. A Ferric oxidoreductase domain is found at 174–294 (GIVGNICLAF…YLYIVFMLFF (121 aa)). Residues 208–231 (YHIWLGHLVMIIFTSHGLCYFIYW) form a helical membrane-spanning segment. His-209 and His-223 together coordinate heme. Residues 232–282 (ISKNQLVSKMLEWDRTAVSNLAGEIALVAGLMMWVTTYPKIRRRLFEVFFY) are Cytoplasmic-facing. Residues 283 to 307 (SHYLYIVFMLFFVFHVGISHALIPL) form a helical membrane-spanning segment. Residues His-284 and His-297 each contribute to the heme site. The Lumenal portion of the chain corresponds to 308-329 (PGFYIFLVDRFLRFLQSRNNVK). The 108-residue stretch at 323-430 (QSRNNVKLVS…EGPYGPSSTD (108 aa)) folds into the FAD-binding FR-type domain. The chain crosses the membrane as a helical span at residues 330 to 350 (LVSARVLPCDTVELNFSKNPM). Residues 351 to 550 (LMYSPTSTMF…PISPILGPNS (200 aa)) are Cytoplasmic-facing. FAD is bound at residue 372-375 (HPFT). Residue 422 to 425 (GPYG) participates in NAD(+) binding. A helical transmembrane segment spans residues 551–573 (WLCLAAILSSSFMIFIVIIAIIT). The Lumenal segment spans residues 574-592 (RYHIHPIDQNSEKYTWAYK). Residues 593 to 614 (SLIYLVSISITVVTTSTAAMLW) form a helical membrane-spanning segment. Residues 615-704 (NKKKYYAKND…LHFESISFSW (90 aa)) lie on the Cytoplasmic side of the membrane.

Belongs to the ferric reductase (FRE) family. Requires FAD as cofactor. Expressed in siliques. Detected in roots.

Its subcellular location is the membrane. It carries out the reaction 2 a Fe(II)-siderophore + NAD(+) + H(+) = 2 a Fe(III)-siderophore + NADH. Functionally, ferric chelate reductase involved in iron reduction in roots. May participate in the transport of electrons to a Fe(3+) ion via FAD and heme intermediates. The polypeptide is Probable ferric reduction oxidase 1 (FRO1) (Arabidopsis thaliana (Mouse-ear cress)).